A 268-amino-acid polypeptide reads, in one-letter code: Hemolysin C (268 aa).

CBS domains lie at 52 to 111 and 114 to 171; these read MVPR…NFSL and ILHK…IRDE.

This sequence belongs to the UPF0053 family.

In terms of biological role, bacterial hemolysins are exotoxins that attack blood cell membranes and cause cell rupture by mechanisms not clearly defined. In Brachyspira hyodysenteriae (Treponema hyodysenteriae), this protein is Hemolysin C (tlyC).